The following is a 158-amino-acid chain: NAD(P)H-quinone oxidoreductase subunit J, chloroplastic (158 aa).

It belongs to the complex I 30 kDa subunit family. In terms of assembly, NDH is composed of at least 16 different subunits, 5 of which are encoded in the nucleus.

Its subcellular location is the plastid. The protein localises to the chloroplast thylakoid membrane. It carries out the reaction a plastoquinone + NADH + (n+1) H(+)(in) = a plastoquinol + NAD(+) + n H(+)(out). It catalyses the reaction a plastoquinone + NADPH + (n+1) H(+)(in) = a plastoquinol + NADP(+) + n H(+)(out). In terms of biological role, NDH shuttles electrons from NAD(P)H:plastoquinone, via FMN and iron-sulfur (Fe-S) centers, to quinones in the photosynthetic chain and possibly in a chloroplast respiratory chain. The immediate electron acceptor for the enzyme in this species is believed to be plastoquinone. Couples the redox reaction to proton translocation, and thus conserves the redox energy in a proton gradient. The chain is NAD(P)H-quinone oxidoreductase subunit J, chloroplastic from Aethionema grandiflorum (Persian stone-cress).